Reading from the N-terminus, the 45-residue chain is Photosystem II reaction center protein K (45 aa).

A propeptide spanning residues 1–8 is cleaved from the precursor; that stretch reads MDVNFLLS. The chain crosses the membrane as a helical span at residues 20–40; sequence IVDVMPAIPVFFLLLAFVWQA.

Belongs to the PsbK family. PSII is composed of 1 copy each of membrane proteins PsbA, PsbB, PsbC, PsbD, PsbE, PsbF, PsbH, PsbI, PsbJ, PsbK, PsbL, PsbM, PsbT, PsbX, PsbY, PsbZ, Psb30/Ycf12, at least 3 peripheral proteins of the oxygen-evolving complex and a large number of cofactors. It forms dimeric complexes.

The protein resides in the plastid. It localises to the chloroplast thylakoid membrane. Functionally, one of the components of the core complex of photosystem II (PSII). PSII is a light-driven water:plastoquinone oxidoreductase that uses light energy to abstract electrons from H(2)O, generating O(2) and a proton gradient subsequently used for ATP formation. It consists of a core antenna complex that captures photons, and an electron transfer chain that converts photonic excitation into a charge separation. The sequence is that of Photosystem II reaction center protein K from Emiliania huxleyi (Coccolithophore).